Here is a 489-residue protein sequence, read N- to C-terminus: MSAASQRVGAFGEEAGYHKGLKPRQLQMIGIGGAIGTGLFLGAGGRLAKAGPGLFLVYGVCGVFVFLILRALGELVLHRPSSGSFVSYAREFFGEKAAYAVGWMYFLHWAMTSIVDTTAIATYLQRWTIFTVVPQWILALIALTVVLSMNLISVEWFGELEFWAALIKVLALMAFLVVGTVFLAGRYPVDGHSTGLSLWNNHGGLFPTSWLPLLIVTSGVVFAYSAVELVGTAAGETAEPEKIMPRAINSVVARIAIFYVGSVALLALLLPYTAYKAGESPFVTFFSKIGFHGAGDLMNIVVLTAALSSLNAGLYSTGRVMHSIAMSGSAPRFTARMSKSGVPYGGIVLTAVITLFGVALNAFKPGEAFEIVLNMSALGIIAGWATIVLCQLRLHKLANAGIMQRPRFRMPFSPYSGYLTLLFLLVVLVTMASDKPIGTWTVATLIIVIPALTAGWYLVRKRVMAVARERLGHTGPFPAVANPPVRSRD.

12 consecutive transmembrane segments (helical) span residues 25–45 (QLQM…GAGG), 49–69 (KAGP…FLIL), 100–120 (AVGW…TTAI), 137–157 (ILAL…VEWF), 162–182 (FWAA…GTVF), 210–230 (WLPL…VELV), 255–275 (IAIF…YTAY), 289–309 (IGFH…ALSS), 344–364 (YGGI…NAFK), 369–389 (FEIV…TIVL), 413–433 (SPYS…TMAS), and 439–459 (TWTV…WYLV).

The protein belongs to the amino acid-polyamine-organocation (APC) superfamily. Amino acid transporter (AAT) (TC 2.A.3.1) family.

The protein localises to the cell membrane. This chain is L-asparagine permease 1 (ansP1), found in Mycobacterium tuberculosis (strain CDC 1551 / Oshkosh).